The sequence spans 858 residues: Neural cell adhesion molecule 1 (858 aa).

Positions 1–19 (MLRTKDLIWTLFFLGTAVS) are cleaved as a signal peptide. 5 consecutive Ig-like C2-type domains span residues 20–111 (LQVD…ATVN), 116–205 (QKLM…KDIQ), 212–302 (PTVQ…ASIH), 309–414 (PKIT…LEVQ), and 417–502 (PKLQ…ESLE). At 20–721 (LQVDIVPSQG…NGSPTAGLST (702 aa)) the chain is on the extracellular side. Disulfide bonds link Cys41–Cys96 and Cys139–Cys189. Heparin-binding positions include 152–156 (KHKGR) and 161–165 (KKDVR). Residue Asn222 is glycosylated (N-linked (GlcNAc...) asparagine). Cys235 and Cys288 are joined by a disulfide. N-linked (GlcNAc...) asparagine glycans are attached at residues Asn316, Asn348, Asn434, Asn460, and Asn489. Cysteines 330 and 396 form a disulfide. Cysteines 437 and 490 form a disulfide. 2 Fibronectin type-III domains span residues 510–609 (TPSS…TQPV) and 611–706 (EPSA…SAQP). A helical transmembrane segment spans residues 722 to 739 (GAIVGILIVIFVLLLVVM). At 740–858 (DITCYFLNKC…TQTKENESKA (119 aa)) the chain is on the cytoplasmic side. Residues 765 to 858 (PGAKGKDMEE…TQTKENESKA (94 aa)) form a disordered region. 2 stretches are compositionally biased toward basic and acidic residues: residues 768 to 809 (KGKD…HTEP) and 817 to 834 (EPEKGPVETKSEPQESEA). 2 positions are modified to phosphoserine: Ser780 and Ser784.

As to quaternary structure, interacts with MDK. Found in a complex with SLC39A6, SLC39A10 and with NCAM1; this complex controls NCAM1 phosphorylation and integration into focal adhesion complexes during epithelial-tomesenchymal transition. Interacts with synaptic plasticity regulator PANTS. Polysialylated by ST8SIA2 and ST8SIA4. Polysialylation modulates cell interactions by confering both attractive and repulsive properties that are highly regulated by ST8SIA2 and ST8SIA4. Polysialylation is formed on a-2,3-linked sialic acid of core glycans.

The protein resides in the cell membrane. Its function is as follows. This protein is a cell adhesion molecule involved in neuron-neuron adhesion, neurite fasciculation, outgrowth of neurites, etc. The protein is Neural cell adhesion molecule 1 of Rattus norvegicus (Rat).